The chain runs to 358 residues: Probable butyrate kinase (358 aa).

It belongs to the acetokinase family.

The protein localises to the cytoplasm. The catalysed reaction is butanoate + ATP = butanoyl phosphate + ADP. This is Probable butyrate kinase from Oceanobacillus iheyensis (strain DSM 14371 / CIP 107618 / JCM 11309 / KCTC 3954 / HTE831).